The primary structure comprises 670 residues: Acetyl-coenzyme A synthetase (670 aa).

Residues R205–R208 and T326 contribute to the CoA site. ATP contacts are provided by residues G402–P404, S426–T431, D517, R532, and R543. 2 residues coordinate Mg(2+): H556 and V559. R601 lines the CoA pocket. K626 carries the post-translational modification N6-acetyllysine.

It belongs to the ATP-dependent AMP-binding enzyme family. The cofactor is Mg(2+). Acetylated. Deacetylation by the SIR2-homolog deacetylase activates the enzyme.

It carries out the reaction acetate + ATP + CoA = acetyl-CoA + AMP + diphosphate. Its function is as follows. Catalyzes the conversion of acetate into acetyl-CoA (AcCoA), an essential intermediate at the junction of anabolic and catabolic pathways. AcsA undergoes a two-step reaction. In the first half reaction, AcsA combines acetate with ATP to form acetyl-adenylate (AcAMP) intermediate. In the second half reaction, it can then transfer the acetyl group from AcAMP to the sulfhydryl group of CoA, forming the product AcCoA. The protein is Acetyl-coenzyme A synthetase of Pyrobaculum aerophilum (strain ATCC 51768 / DSM 7523 / JCM 9630 / CIP 104966 / NBRC 100827 / IM2).